The sequence spans 490 residues: Betaine aldehyde dehydrogenase (490 aa).

K(+) is bound by residues Ser-26, Ile-27, and Asp-93. 150–152 (GAW) lines the NAD(+) pocket. Lys-162 acts as the Charge relay system in catalysis. NAD(+)-binding positions include 176 to 179 (KPSE) and 230 to 233 (GVET). Leu-246 provides a ligand contact to K(+). Glu-252 functions as the Proton acceptor in the catalytic mechanism. Positions 254, 286, and 387 each coordinate NAD(+). The Nucleophile role is filled by Cys-286. Cys-286 is modified (cysteine sulfenic acid (-SOH)). Lys-457 and Gly-460 together coordinate K(+). The active-site Charge relay system is the Glu-464.

Belongs to the aldehyde dehydrogenase family. As to quaternary structure, dimer of dimers. K(+) serves as cofactor.

The catalysed reaction is betaine aldehyde + NAD(+) + H2O = glycine betaine + NADH + 2 H(+). Its pathway is amine and polyamine biosynthesis; betaine biosynthesis via choline pathway; betaine from betaine aldehyde: step 1/1. Functionally, involved in the biosynthesis of the osmoprotectant glycine betaine. Catalyzes the irreversible oxidation of betaine aldehyde to the corresponding acid. The protein is Betaine aldehyde dehydrogenase of Acinetobacter baumannii (strain SDF).